The chain runs to 306 residues: Probable pinoresinol-lariciresinol reductase 3 (306 aa).

Residues 14 to 20 (GATGRLG), arginine 39, and lysine 46 contribute to the NADP(+) site. The Proton acceptor role is filled by lysine 131. Arginine 135 is a binding site for NADP(+).

It belongs to the NmrA-type oxidoreductase family. Isoflavone reductase subfamily. As to quaternary structure, dimer.

Its function is as follows. Probable reductase that might be involved in the reduction of lariciresinol into secoisolariciresinol. In most plant species, a single enzyme is able to reduce both pinoresinol and lariciresinol efficiently while in Arabidopsis, PRR1 and PRR2 show a strict substrate selectivity for pinoresinol. This chain is Probable pinoresinol-lariciresinol reductase 3 (PLR3), found in Arabidopsis thaliana (Mouse-ear cress).